A 279-amino-acid polypeptide reads, in one-letter code: Thymidylate synthase (279 aa).

Arg-29 lines the dUMP pocket. His-59 provides a ligand contact to (6R)-5,10-methylene-5,6,7,8-tetrahydrofolate. 134–135 (RR) is a binding site for dUMP. Cys-154 (nucleophile) is an active-site residue. Residues 181–184 (RSAD), Asn-192, and 222–224 (HIY) contribute to the dUMP site. Asp-184 serves as a coordination point for (6R)-5,10-methylene-5,6,7,8-tetrahydrofolate. Ala-278 contributes to the (6R)-5,10-methylene-5,6,7,8-tetrahydrofolate binding site.

The protein belongs to the thymidylate synthase family. Bacterial-type ThyA subfamily. Homodimer.

It is found in the cytoplasm. The enzyme catalyses dUMP + (6R)-5,10-methylene-5,6,7,8-tetrahydrofolate = 7,8-dihydrofolate + dTMP. Its pathway is pyrimidine metabolism; dTTP biosynthesis. Functionally, catalyzes the reductive methylation of 2'-deoxyuridine-5'-monophosphate (dUMP) to 2'-deoxythymidine-5'-monophosphate (dTMP) while utilizing 5,10-methylenetetrahydrofolate (mTHF) as the methyl donor and reductant in the reaction, yielding dihydrofolate (DHF) as a by-product. This enzymatic reaction provides an intracellular de novo source of dTMP, an essential precursor for DNA biosynthesis. In Paracidovorax citrulli (strain AAC00-1) (Acidovorax citrulli), this protein is Thymidylate synthase.